Here is a 230-residue protein sequence, read N- to C-terminus: Protein-L-isoaspartate O-methyltransferase 1 (230 aa).

The active site involves S65.

It belongs to the methyltransferase superfamily. L-isoaspartyl/D-aspartyl protein methyltransferase family. Monomer. Expressed in roots, rosette leaves, stems, cauline leaves, flowers and developing seeds.

The protein localises to the cytoplasm. It catalyses the reaction [protein]-L-isoaspartate + S-adenosyl-L-methionine = [protein]-L-isoaspartate alpha-methyl ester + S-adenosyl-L-homocysteine. Functionally, catalyzes the methyl esterification of L-isoaspartyl residues in peptides and proteins that result from spontaneous decomposition of normal L-aspartyl and L-asparaginyl residues. It plays a role in the repair and/or degradation of damaged proteins. Contributes to seed longevity and germination vigor by limiting the abnormal accumulation of the L-isoaspartyl residues in seed proteins. The polypeptide is Protein-L-isoaspartate O-methyltransferase 1 (PIMT1) (Arabidopsis thaliana (Mouse-ear cress)).